The primary structure comprises 530 residues: Vesicular acetylcholine transporter (530 aa).

Topologically, residues 1 to 33 (MEPTAPTGQARAAATKLSEAVGAALQEPQRQRR) are cytoplasmic. The chain crosses the membrane as a helical span at residues 34–54 (LVLVIVCVALLLDNMLYMVIV). Residues 55–125 (PIVPDYIAHM…PTESEDVKIG (71 aa)) lie on the Lumenal, vesicle side of the membrane. 2 N-linked (GlcNAc...) asparagine glycosylation sites follow: Asn89 and Asn96. Residues 126 to 146 (VLFASKAILQLLVNPLSGPFI) form a helical membrane-spanning segment. The Cytoplasmic segment spans residues 147-152 (DRMSYD). Residues 153–173 (VPLLIGLGVMFASTVMFAFAE) traverse the membrane as a helical segment. Topologically, residues 174–182 (DYATFFAAR) are lumenal, vesicle. A helical transmembrane segment spans residues 183–203 (SLQGLGSAFADTSGIAMIADK). The Cytoplasmic segment spans residues 204-213 (YPEEPERSRA). Residues 214 to 234 (LGVALAFISFGSLVAPPFGGI) form a helical membrane-spanning segment. Residues 235 to 242 (LYEFAGKR) are Lumenal, vesicle-facing. The chain crosses the membrane as a helical span at residues 243 to 263 (VPFLVLAAVSLFDALLLLAVA). The Cytoplasmic portion of the chain corresponds to 264 to 288 (KPFSAAARARANLPVGTPIHRLMLD). A helical transmembrane segment spans residues 289–309 (PYIAVVAGALTTCNIPLAFLE). The Lumenal, vesicle portion of the chain corresponds to 310–325 (PTIATWMKHTMAASEW). A helical transmembrane segment spans residues 326–346 (EMGMVWLPAFVPHVLGVYLTV). At 347-356 (RLAARYPHLQ) the chain is on the cytoplasmic side. Residues 357-377 (WLYGALGLAVIGVSSCVVPAC) form a helical membrane-spanning segment. At 378–388 (RSFAPLVVSLC) the chain is on the lumenal, vesicle side. Residues 389–409 (GLCFGIALVDTALLPTLAFLV) traverse the membrane as a helical segment. Over 410-422 (DVRHVSVYGSVYA) the chain is Cytoplasmic. A helical transmembrane segment spans residues 423-443 (IADISYSVAYALGPIVAGHIV). At 444-447 (HSLG) the chain is on the lumenal, vesicle side. A helical membrane pass occupies residues 448–468 (FEQLSLGMGLANLLYAPVLLL). Residues 469-530 (LRNVGLLTRS…EDDYNYYSRS (62 aa)) lie on the Cytoplasmic side of the membrane. Positions 471–530 (NVGLLTRSRSERDVLLDEPPQGLYDAVRLREVQGKDGGEPCSPPGPFDGCEDDYNYYSRS) are mediates interaction with SEC14L1. The segment at 504 to 530 (GKDGGEPCSPPGPFDGCEDDYNYYSRS) is disordered.

It belongs to the major facilitator superfamily. Vesicular transporter family. As to quaternary structure, interacts with SEC14L1. Expressed in the spinal cord, brain (excluding the cerebellum), brain stem and cholinergic tissues. Not expressed in peripheral tissues such as liver and kidney.

The protein localises to the cytoplasmic vesicle. The protein resides in the secretory vesicle. It localises to the synaptic vesicle membrane. The catalysed reaction is acetylcholine(out) + 2 H(+)(in) = acetylcholine(in) + 2 H(+)(out). It carries out the reaction choline(in) + 2 H(+)(out) = choline(out) + 2 H(+)(in). The enzyme catalyses serotonin(in) + 2 H(+)(out) = serotonin(out) + 2 H(+)(in). In terms of biological role, electrogenic antiporter that exchanges one cholinergic neurotransmitter, acetylcholine or choline, with two intravesicular protons across the membrane of synaptic vesicles. Uses the electrochemical proton gradient established by the V-type proton-pump ATPase to store neurotransmitters inside the vesicles prior to their release via exocytosis. Determines cholinergic vesicular quantal size at presynaptic nerve terminals in developing neuro-muscular junctions with an impact on motor neuron differentiation and innervation pattern. Part of forebrain cholinergic system, regulates hippocampal synapse transmissions that underlie spatial memory formation. Can transport serotonin. This chain is Vesicular acetylcholine transporter (Slc18a3), found in Mus musculus (Mouse).